The sequence spans 386 residues: Putative acid--amine ligase YgiC (386 aa).

An ATP-binding site is contributed by 100 to 102 (RLD). D102, E115, and N117 together coordinate Mg(2+). Residues K267, K302, G309, Q336, and 371 to 373 (LIT) contribute to the ATP site.

Belongs to the glutathionylspermidine synthase preATP-grasp family.

Functionally, may be a ligase forming an amide bond. Shows ATPase activity. This Escherichia coli O157:H7 protein is Putative acid--amine ligase YgiC (ygiC).